A 262-amino-acid polypeptide reads, in one-letter code: Phosphoribosyl 1,2-cyclic phosphate 1,2-diphosphodiesterase (262 aa).

The Mn(2+) site is built by His-6, His-8, Asp-13, His-38, Glu-63, His-76, His-193, Asp-245, and His-247.

This sequence belongs to the PHP family. Mn(2+) serves as cofactor.

The enzyme catalyses alpha-D-ribose 1,2-cyclic phosphate 5-phosphate + H2O = D-ribose 2,5-bisphosphate + H(+). It catalyses the reaction D-ribose 2,5-bisphosphate + H2O = D-ribose 5-phosphate + phosphate. In terms of biological role, involved in degradation of methylphosphonate. Catalyzes the hydrolysis of the phosphate ester at carbon-1 of 5-phospho-D-ribose 1,2-cyclic phosphate to form ribose 2,5-bisphosphate. This intermediate is then hydrolyzed to ribose-5-phosphate and inorganic phosphate. The protein is Phosphoribosyl 1,2-cyclic phosphate 1,2-diphosphodiesterase of Eggerthella lenta (strain ATCC 25559 / DSM 2243 / CCUG 17323 / JCM 9979 / KCTC 3265 / NCTC 11813 / VPI 0255 / 1899 B) (Eubacterium lentum).